The following is a 473-amino-acid chain: H(+)/Cl(-) exchange transporter ClcA (473 aa).

At 1–32 the chain is on the cytoplasmic side; sequence MKTDTPTFEAQQIVRLRRGRLIRRLVQRDKTP. Residues 33–69 form a helical membrane-spanning segment; it reads LAILLMAAVVGTLTGLVGVAFEKAVSWVQNMRIGALV. At 70 to 76 the chain is on the periplasmic side; the sequence is QVADHAF. Residues 77–100 form a helical membrane-spanning segment; sequence LLWPLAFILSALLAMVGYFLVRKF. Residues 106–110 carry the Selectivity filter part_1 motif; that stretch reads GSGIP. Chloride is bound at residue Ser-107. The helical intramembrane region spans 109 to 116; the sequence is IPEIEGAL. Residues 117 to 123 are Cytoplasmic-facing; that stretch reads EELRPVR. 2 helical membrane passes run 124 to 141 and 148 to 166; these read WWRV…TLGA and EGPT…LDVF. The Selectivity filter part_2 motif lies at 146–150; that stretch reads GREGP. At 167-176 the chain is on the cytoplasmic side; that stretch reads RMRSAEARHT. 2 consecutive intramembrane regions (helical) follow at residues 177 to 189 and 193 to 201; these read LLAT…LSAA and PLAGILFII. The Cytoplasmic segment spans residues 202-214; sequence EEMRPQFRYNLIS. A helical transmembrane segment spans residues 215 to 232; that stretch reads IKAVFTGVIMSSIVFRIF. Residues 233-252 lie on the Periplasmic side of the membrane; sequence NGEAPIIEVGKLSNAPVNTL. A helical transmembrane segment spans residues 253 to 281; that stretch reads WLYLVLGIIFGCVGPVFNTLVLRTQDMFQ. The Cytoplasmic segment spans residues 282–287; sequence RFHGGE. The chain crosses the membrane as a helical span at residues 288–309; that stretch reads IKKWVLMGGAIGGLCGILGLIE. Over 310–329 the chain is Periplasmic; it reads PEAAGGGFNLIPIAAAGNFS. The next 2 helical transmembrane spans lie at 330 to 349 and 355 to 376; these read VGLL…LCFS and GIFA…MAAA. A Selectivity filter part_3 motif is present at residues 355–359; the sequence is GIFAP. Residues Ile-356 and Phe-357 each coordinate chloride. Over 377 to 386 the chain is Periplasmic; sequence VLFPQYHLEA. Positions 387–401 form an intramembrane region, helical; it reads GTFAIAGMGALMAAS. Positions 402–404 form an intramembrane region, note=Loop between two helices; the sequence is VRA. The segment at residues 405-416 is an intramembrane region (helical); sequence PLTGIVLVLEMT. The segment at residues 417–421 is an intramembrane region (note=Loop between two helices); the sequence is DNYQL. Residues 422–438 traverse the membrane as a helical segment; that stretch reads ILPMIITCLGATLLAQF. Residues 439 to 473 are Cytoplasmic-facing; the sequence is LGGKPLYSTILARTLAKQDAEQAAKNQSTPAGENT. A chloride-binding site is contributed by Tyr-445.

This sequence belongs to the chloride channel (TC 2.A.49) family. ClcA subfamily. In terms of assembly, homodimer.

Its subcellular location is the cell inner membrane. It carries out the reaction 2 chloride(in) + H(+)(out) = 2 chloride(out) + H(+)(in). Proton-coupled chloride transporter. Functions as antiport system and exchanges two chloride ions for 1 proton. Probably acts as an electrical shunt for an outwardly-directed proton pump that is linked to amino acid decarboxylation, as part of the extreme acid resistance (XAR) response. This chain is H(+)/Cl(-) exchange transporter ClcA, found in Salmonella arizonae (strain ATCC BAA-731 / CDC346-86 / RSK2980).